We begin with the raw amino-acid sequence, 93 residues long: uncharacterized protein (93 aa).

Residues 25–68 (DIKKLSQVKSELEQGKALLEEEKKELIEKNSNLNLQISNMNHLK) are a coiled coil.

This is an uncharacterized protein from Dictyostelium discoideum (Social amoeba).